The following is a 389-amino-acid chain: ELAV-like protein 2 (389 aa).

RRM domains are found at residues 66–145 (TNLI…YARP), 153–233 (ANLY…FANN), and 306–384 (WCIF…FKTS).

The protein belongs to the RRM elav family. As to quaternary structure, part of a ribonucleoprotein (RNP) complex, at least composed of elavl1/elrA and/or elavl2/elrB, igf2bp3/vg1RBP, ddx6/Xp54, ybx2/frgy2, lsm14b/rap55b and, in a subset of RNP complexes, stau1/staufen. Binds RNA as a homooligomer. In terms of tissue distribution, expressed in brain, testis and ovary. Ovarian expression is restricted to follicle cells surrounding the oocyte. From the early tailbud stage, expression is neural-specific and is seen in both the central and peripheral nervous system in differentiating neurons but not proliferating precursors. Expressed in the retina from stage 32 with expression becoming restricted to the ganglion cell layer by later stages.

The protein localises to the cytoplasm. The protein resides in the cell cortex. In terms of biological role, binds to poly-U elements and AU-rich elements (AREs) in the 3'-UTR of target mRNAs. Required for the vegetal localization of vg1 mRNA. Probably required for nervous system development. This chain is ELAV-like protein 2 (elavl2), found in Xenopus laevis (African clawed frog).